Here is a 247-residue protein sequence, read N- to C-terminus: Uridylate kinase (247 aa).

Residue 15 to 18 (KLSG) coordinates ATP. The interval 23–28 (GEEGFG) is involved in allosteric activation by GTP. Residue Gly57 coordinates UMP. The ATP site is built by Gly58 and Arg62. UMP is bound by residues Asp77 and 138-145 (TGNPFFTT). ATP-binding residues include Thr165, Tyr171, and Asp174.

The protein belongs to the UMP kinase family. As to quaternary structure, homohexamer.

The protein resides in the cytoplasm. It carries out the reaction UMP + ATP = UDP + ADP. It participates in pyrimidine metabolism; CTP biosynthesis via de novo pathway; UDP from UMP (UMPK route): step 1/1. Allosterically activated by GTP. Inhibited by UTP. Its function is as follows. Catalyzes the reversible phosphorylation of UMP to UDP. This is Uridylate kinase from Pseudoalteromonas atlantica (strain T6c / ATCC BAA-1087).